We begin with the raw amino-acid sequence, 224 residues long: Protein PLANT CADMIUM RESISTANCE 6 (224 aa).

The helical transmembrane segment at 131–151 threads the bilayer; the sequence is GMLYGLICCLFAIPCVYTCTF.

This sequence belongs to the cornifelin family.

It localises to the membrane. Functionally, may be involved in heavy metals transport. This Arabidopsis thaliana (Mouse-ear cress) protein is Protein PLANT CADMIUM RESISTANCE 6 (PCR6).